Consider the following 141-residue polypeptide: Methylglyoxal synthase (141 aa).

An MGS-like domain is found at 1–141 (MNIALIAHDK…PKLQKNKSDK (141 aa)). Residues His8, Lys12, and 34 to 37 (TGTT) contribute to the substrate site. Asp60 (proton donor/acceptor) is an active-site residue. Residue His87 participates in substrate binding.

Belongs to the methylglyoxal synthase family.

The catalysed reaction is dihydroxyacetone phosphate = methylglyoxal + phosphate. In terms of biological role, catalyzes the formation of methylglyoxal from dihydroxyacetone phosphate. This Caldicellulosiruptor bescii (strain ATCC BAA-1888 / DSM 6725 / KCTC 15123 / Z-1320) (Anaerocellum thermophilum) protein is Methylglyoxal synthase.